The primary structure comprises 348 residues: Bifunctional dihydroflavonol 4-reductase/flavanone 4-reductase (348 aa).

NADP(+) is bound by residues K44 and Y163.

This sequence belongs to the NAD(P)-dependent epimerase/dehydratase family. Dihydroflavonol-4-reductase subfamily.

The catalysed reaction is a (2R,3S,4S)-leucoanthocyanidin + NADP(+) = a (2R,3R)-dihydroflavonol + NADPH + H(+). The enzyme catalyses (2S)-flavan-4-ol + NADP(+) = (2S)-flavanone + NADPH + H(+). Bifunctional enzyme involved in flavonoid metabolism. May use dihydroquercetin, dihydrokaempferol, eriodictyol, garbanzol (5-deoxydihydrokaempferol), dihydrofisetin (5-deoxydihydroquercetin), naringenin to a low extent (10%), but not 5-deoxynaringenin or butin (5-deoxyeriodictyol) as substrate. The sequence is that of Bifunctional dihydroflavonol 4-reductase/flavanone 4-reductase (DFR) from Malus domestica (Apple).